A 175-amino-acid polypeptide reads, in one-letter code: NADH-ubiquinone oxidoreductase chain 6 (175 aa).

Helical transmembrane passes span methionine 1–serine 21, serine 24–methionine 44, leucine 51–isoleucine 71, valine 87–phenylalanine 107, leucine 113–glycine 133, and tyrosine 148–isoleucine 168.

The protein belongs to the complex I subunit 6 family. In terms of assembly, core subunit of respiratory chain NADH dehydrogenase (Complex I) which is composed of 45 different subunits.

It localises to the mitochondrion inner membrane. The catalysed reaction is a ubiquinone + NADH + 5 H(+)(in) = a ubiquinol + NAD(+) + 4 H(+)(out). Core subunit of the mitochondrial membrane respiratory chain NADH dehydrogenase (Complex I) which catalyzes electron transfer from NADH through the respiratory chain, using ubiquinone as an electron acceptor. Essential for the catalytic activity and assembly of complex I. This Mammuthus primigenius (Siberian woolly mammoth) protein is NADH-ubiquinone oxidoreductase chain 6 (MT-ND6).